The following is a 512-amino-acid chain: UDP-N-acetylmuramate--L-alanine ligase (512 aa).

132–138 (GAHGKTT) contributes to the ATP binding site.

This sequence belongs to the MurCDEF family.

Its subcellular location is the cytoplasm. The enzyme catalyses UDP-N-acetyl-alpha-D-muramate + L-alanine + ATP = UDP-N-acetyl-alpha-D-muramoyl-L-alanine + ADP + phosphate + H(+). It participates in cell wall biogenesis; peptidoglycan biosynthesis. In terms of biological role, cell wall formation. This Bifidobacterium longum (strain NCC 2705) protein is UDP-N-acetylmuramate--L-alanine ligase.